We begin with the raw amino-acid sequence, 283 residues long: Ribosomal RNA small subunit methyltransferase A (283 aa).

S-adenosyl-L-methionine is bound by residues asparagine 13, leucine 15, glycine 39, glutamate 59, aspartate 87, and asparagine 108.

The protein belongs to the class I-like SAM-binding methyltransferase superfamily. rRNA adenine N(6)-methyltransferase family. RsmA subfamily.

Its subcellular location is the cytoplasm. The enzyme catalyses adenosine(1518)/adenosine(1519) in 16S rRNA + 4 S-adenosyl-L-methionine = N(6)-dimethyladenosine(1518)/N(6)-dimethyladenosine(1519) in 16S rRNA + 4 S-adenosyl-L-homocysteine + 4 H(+). Specifically dimethylates two adjacent adenosines (A1518 and A1519) in the loop of a conserved hairpin near the 3'-end of 16S rRNA in the 30S particle. May play a critical role in biogenesis of 30S subunits. The protein is Ribosomal RNA small subunit methyltransferase A of Helicobacter hepaticus (strain ATCC 51449 / 3B1).